The sequence spans 105 residues: MANNVMDSSFKKEVLESDLPVLVDFWAEWCGPCKMLTPIIDEISKELQGKVKVLKMNIDENPNTPSEYGIRSIPTIMLFKNGEQKDTKIGLQQKNSLLDWINKSI.

Residues 1–105 (MANNVMDSSF…SLLDWINKSI (105 aa)) form the Thioredoxin domain. C30 and C33 are joined by a disulfide.

This sequence belongs to the thioredoxin family.

In terms of biological role, component of the thioredoxin-thioredoxin reductase system. Participates in various redox reactions through the reversible oxidation of its active center dithiol to a disulfide and catalyzes dithiol-disulfide exchange reactions. This Rickettsia conorii (strain ATCC VR-613 / Malish 7) protein is Thioredoxin (trxA).